Here is a 219-residue protein sequence, read N- to C-terminus: Antigen 5 like allergen Cul n 1 (219 aa).

A signal peptide spans 1–19 (MIKKLSIVILFSCISFVLS). Intrachain disulfides connect Cys23–Cys45, Cys28–Cys124, and Cys55–Cys117. In terms of domain architecture, SCP spans 73–211 (LKVHNRLRNK…RHSGNKYFFW (139 aa)).

The protein belongs to the CRISP family. Expressed in salivary glands.

Its subcellular location is the secreted. This Culicoides nubeculosus (Biting midge) protein is Antigen 5 like allergen Cul n 1.